Consider the following 691-residue polypeptide: Competence protein ComA (691 aa).

6 consecutive transmembrane segments (helical) span residues 183–203 (HLVS…AWLA), 220–240 (WVLA…GFSV), 280–300 (LAVL…LIWA), 322–342 (VLSL…SPLV), 347–367 (IPWF…VPFA), and 396–416 (VAAA…LLLL).

To B.subtilis ComEC, H.influenzae REC2, and E.coli YcaI.

The protein localises to the cell inner membrane. Its function is as follows. Essential for natural transformation. Could be a transporter involved in DNA uptake. This Neisseria gonorrhoeae protein is Competence protein ComA (comA).